The sequence spans 1668 residues: Probable histone acetyltransferase HAC-like 1 (1668 aa).

Disordered stretches follow at residues 1 to 34, 459 to 493, and 528 to 551; these read MNVGQAAHLSGQMSGQAPQTNQVGGSGVGGADGL, QQQPNSQHQQSILRSNSLKQPQLSSSHSMQLSEQG, and KGGQVFGHLSSSQNFHSNASHDSQ. The span at 11 to 23 shows a compositional bias: polar residues; that stretch reads GQMSGQAPQTNQV. Low complexity predominate over residues 459 to 469; it reads QQQPNSQHQQS. Polar residues-rich tracts occupy residues 470–491 and 536–551; these read ILRSNSLKQPQLSSSHSMQLSE and LSSSQNFHSNASHDSQ. Residues 651–732 form a TAZ-type 1 zinc finger; it reads AAGNIYYFRQ…DLQCPVCSNA (82 aa). Positions 886–899 are enriched in basic and acidic residues; the sequence is KETSETAPEVKNEA. The segment at 886–912 is disordered; it reads KETSETAPEVKNEANDSTDITVSKSGK. Residues 900 to 909 show a composition bias toward polar residues; sequence NDSTDITVSK. The segment at 1002–1079 adopts a PHD-type zinc-finger fold; that stretch reads HFFCIPCYNE…EYTCPNCYVE (78 aa). The region spanning 1094–1530 is the CBP/p300-type HAT domain; sequence VLGAKDLPRT…VLYHLHNPTA (437 aa). Residues 1217–1219, 1236–1237, and Trp1292 each bind acetyl-CoA; these read LDS and RT. Positions 1342-1365 form a coiled coil; the sequence is GAAEDMINQLRQEEDDRKQQKKGK. The ZZ-type zinc finger occupies 1412 to 1475; sequence HLQYSCSHCC…TLHPVDIVGL (64 aa). Residues Cys1417, Cys1420, Cys1432, Cys1435, Cys1441, Cys1444, His1457, and His1465 each coordinate Zn(2+). The TAZ-type 2 zinc-finger motif lies at 1553–1634; sequence EVCPDFDLRK…GCNVPRCRDL (82 aa). The stretch at 1630-1650 forms a coiled coil; sequence RCRDLKEHLRRLQQQSDSRRR.

It localises to the nucleus. It carries out the reaction L-lysyl-[protein] + acetyl-CoA = N(6)-acetyl-L-lysyl-[protein] + CoA + H(+). Functionally, acetyltransferase enzyme. Acetylates histones, giving a specific tag for transcriptional activation. This is Probable histone acetyltransferase HAC-like 1 from Oryza sativa subsp. japonica (Rice).